We begin with the raw amino-acid sequence, 287 residues long: MIKIGAHMPISKGFDRVPKDTIDIGGNSFQIFPHNARSWQAKLPTDEMATKFKREMKKHRIDWENAFCHCGYLVNLASPKEDIWQKSVDLLKTEVEICRKLGIKYLNIHPGSHLGTGEEEGINRIARGLNEVLNNTEDVIILLENVSQKGGNIGYRLEHLKRIIDLVDQKDRVAITYDTCHGFDSGYDITKKEGVESLLSEIENLFGLERLKMIHLNDSKYPLGAAKDRHERIGSGFIGEAGFAVFFSFKEVQRVPWILETPGGNEEHAEDIKKVSEIIEKYRIEVD.

Zn(2+) contacts are provided by H69, H109, E144, D178, H181, H215, D228, H230, and E260.

This sequence belongs to the AP endonuclease 2 family. Zn(2+) serves as cofactor.

The enzyme catalyses Endonucleolytic cleavage to 5'-phosphooligonucleotide end-products.. Its function is as follows. Endonuclease IV plays a role in DNA repair. It cleaves phosphodiester bonds at apurinic or apyrimidinic (AP) sites, generating a 3'-hydroxyl group and a 5'-terminal sugar phosphate. This is Probable endonuclease 4 from Thermotoga neapolitana (strain ATCC 49049 / DSM 4359 / NBRC 107923 / NS-E).